Consider the following 338-residue polypeptide: MAGSHPYFNLPDSTHPSPPSTPPSLHWHQRCQPSDATNGLLVALLGGGLPAGFVGPLSRMAYQASNLPSLELVICRCLFHLPIALLLKLRGDPLLGPPDIRGRTCFCALLNVLNIGCAYSAVQVVPTGNAATVRKHSSTVCSAILTLCLESQVLSGYDWCGLLGSILGLIIIVGPGLWTLQEGTTGVYTGLGYVQAFLGGLALSLGLLVYRSLHFPSCLPTVAFLSGLVGLLGSVPGLFVLQSPVLPSDLLSWSCVGAVGILTLVSFTCVGYAVTKAHPALVCAVLHSEVVMALILQYFMLHETVAPSDIMGAGVVLGSIAIITARNLICERTGKVEE.

Residues 1-29 (MAGSHPYFNLPDSTHPSPPSTPPSLHWHQ) form a disordered region. Helical transmembrane passes span 37–57 (TNGL…VGPL), 160–180 (CGLL…LWTL), 190–210 (GLGY…LLVY), 221–241 (TVAF…LFVL), 250–270 (LLSW…FTCV), 281–301 (LVCA…YFML), and 305–325 (VAPS…IITA). An EamA 1 domain is found at 49-174 (LPAGFVGPLS…SILGLIIIVG (126 aa)). The EamA 2 domain maps to 272 to 325 (YAVTKAHPALVCAVLHSEVVMALILQYFMLHETVAPSDIMGAGVVLGSIAIITA).

The protein belongs to the SLC35G solute transporter family.

The protein resides in the membrane. The chain is Solute carrier family 35 member G4 (SLC35G4) from Homo sapiens (Human).